A 99-amino-acid polypeptide reads, in one-letter code: Small ribosomal subunit protein eS24 (99 aa).

Belongs to the eukaryotic ribosomal protein eS24 family. As to quaternary structure, may be present in 2 copies per 70S ribosome. Part of the 30S ribosomal subunit, where it binds 16S rRNA at its canonical site at the bse of the body, as well as a possible second 50S binding site near 23S rRNA helix 45.

The sequence is that of Small ribosomal subunit protein eS24 from Pyrococcus furiosus (strain ATCC 43587 / DSM 3638 / JCM 8422 / Vc1).